The primary structure comprises 180 residues: Segregation and condensation protein B (180 aa).

This sequence belongs to the ScpB family. In terms of assembly, homodimer. Homodimerization may be required to stabilize the binding of ScpA to the Smc head domains. Component of a cohesin-like complex composed of ScpA, ScpB and the Smc homodimer, in which ScpA and ScpB bind to the head domain of Smc. The presence of the three proteins is required for the association of the complex with DNA.

The protein resides in the cytoplasm. Participates in chromosomal partition during cell division. May act via the formation of a condensin-like complex containing Smc and ScpA that pull DNA away from mid-cell into both cell halves. The polypeptide is Segregation and condensation protein B (Staphylococcus aureus (strain MSSA476)).